The primary structure comprises 213 residues: Orotate phosphoribosyltransferase (213 aa).

Lysine 26 contacts 5-phospho-alpha-D-ribose 1-diphosphate. Phenylalanine 34 to phenylalanine 35 provides a ligand contact to orotate. Residues tyrosine 72–lysine 73, arginine 99, lysine 100, lysine 103, histidine 105, and aspartate 124–alanine 132 contribute to the 5-phospho-alpha-D-ribose 1-diphosphate site. Threonine 128 and arginine 156 together coordinate orotate.

It belongs to the purine/pyrimidine phosphoribosyltransferase family. PyrE subfamily. Homodimer. Mg(2+) is required as a cofactor.

The catalysed reaction is orotidine 5'-phosphate + diphosphate = orotate + 5-phospho-alpha-D-ribose 1-diphosphate. Its pathway is pyrimidine metabolism; UMP biosynthesis via de novo pathway; UMP from orotate: step 1/2. In terms of biological role, catalyzes the transfer of a ribosyl phosphate group from 5-phosphoribose 1-diphosphate to orotate, leading to the formation of orotidine monophosphate (OMP). This chain is Orotate phosphoribosyltransferase, found in Pectobacterium carotovorum subsp. carotovorum (strain PC1).